A 604-amino-acid polypeptide reads, in one-letter code: Protein hemingway (604 aa).

Disordered stretches follow at residues 1-70, 103-309, 359-387, and 544-585; these read MSGA…GNPH, NQLS…PTSQ, SDRR…GGGI, and TIKA…IDLD. 4 stretches are compositionally biased toward acidic residues: residues 8–38, 135–183, 194–214, and 288–300; these read SDEE…YIEP, EDEA…DDAQ, DDSD…EDEP, and EEPE…EENQ. A compositionally biased stretch (low complexity) spans 368–379; that stretch reads EMSSMTETTMTS.

Belongs to the CFAP97 family. Detected in ciliated sensory neurons at all stages of development, and in adult testis.

It is found in the cell projection. The protein resides in the cilium. Its subcellular location is the perikaryon. It localises to the cytoplasm. Involved in assembly and/or maintenance of motile cilia. Required during spermatogenesis for axoneme elongation. Necessary for optimal function of the chordotonal (hearing) organs. The chain is Protein hemingway from Drosophila melanogaster (Fruit fly).